The primary structure comprises 1383 residues: MVILGDEKESYTSYCDKNNDILISKQKIEDLKKSIENLLNDKNAHYELNHIKRSLNELDIYTKNKSDLFNNYNLNESLNDSYKDKTFEELKSQLIKQKNLNSCLSLKLKSIHIKLNNLFLKKNEFEKTINNKIKEIELQFLIIQNVTHENKGIPISKELKEQEKHLQNSHENVAIYDTHEIENNDKKKLYTNFHNEEKDHLKCLLEEYSKTLEIYKMGKIQLEFELKCCKEKLNEEIEKNNNYNNKMKSYEIHIDVVKNENCKNLEELNDLKLQLEKTKSENNQNYVKNKILNDEKNNLDKINNDLKIKIKNFKTLLNDAQNKEYILNNFTQKIFNIITYLKNNDEHNFLNDKIHNKLDINQDQIYVQTELYIDIISSSIRNLINFKKTLEERNVELEKVTHEMKELRKELILKKKNYEELRLKLNHLECVERDSVKINSEKEKGEKVIYELKEKLDNDEKIINDLKKKNSYQVYKMKDYEKRENNLINEINKLKLFIEENKMTVERGNEMNNKKLEEMKQKNKELINNLNDISDELKNCIEQVNSVSRNMANVEKEKENIINELQILRMKNDTMRKRISKFVEQEKVLKFKLYTLNNDIFSKNEKLNDMQKKLNDVNEKYKNIVECLNNYKTEHKEQIEKKIERINTLKQNYYYLKKEYDLKNKELEKNIEHGKKLEHELSHCYEENQKLNEEIKRRNSFIKNKDRKIDLLTNIENELLKKKEINNIKLMEKQNVIKNNEQLLKDIKDENEKMNEHVNKLQNELIKRELQNKCISKDIEFCKKEKEDKIKNLEDDLLEKKKCIENLKDELINIKKKMEDKMHMTNEMDLLSNKVEELNRINKTYEKNIVELNNELDVIKKKLNDEEFLKEEEKKKNIDMVYKIKEYEIQIKEKENEIDSLKKNEQNLHVLKNEELNEKEIILKNKYDKEINMIIEQYNKKIQEEKDMLNNKIKSMDQTHKNQIEEMQEENKKELKRLKNVCDMNLQSQILIKENEKHMQEKVEEYKNLLKQKDQELKNIIQEYDERIEIQNKEMEDIVNDCEEKLKQAKINNKKLTTATNMANNNNMLMDENLKEKDKKINDLMKDMEKKKEEINKLVEEKSKLEHSHVKIQNEMSLLVEQNEKLKEEMGLSRIAIKDMEEIKKDMEKYEEEKKKNEEERKKNEEERKKNEEERKKNEEEKKKNEEERKKNEEEKKKLEKDKHQFEEEKERMEIYEHQKEDRKRKDKKKKGHSSDKEEKYNKKEKTKEKSSNILFDEEYIIQLEELRDTGENCFIYLKSLSKELDVIINKLKSKDDALLNDAFNKINLAITSWNIFNEENKEGDNITTVENTATEGNITIDENTTEVEMNNEEVYKIFSVEKYDMLKKEVGEKVECIQKLIG.

Coiled-coil stretches lie at residues 16–49 (DKNNDILISKQKIEDLKKSIENLLNDKNAHYELN) and 117–324 (NLFL…QNKE). Composition is skewed to basic and acidic residues over residues 1151–1224 (EEEK…EDRK) and 1233–1249 (HSSDKEEKYNKKEKTKE). Positions 1151-1249 (EEEKKKNEEE…KYNKKEKTKE (99 aa)) are disordered.

It belongs to the ATG11 family.

Involved in cytoplasm to vacuole transport (Cvt), pexophagy, mitophagy and nucleophagy. Works as scaffold proteins that recruit ATG proteins to the pre-autophagosome (PAS), the site of vesicle/autophagosome formation. This chain is Putative autophagy-related protein 11, found in Plasmodium falciparum (isolate 3D7).